A 144-amino-acid chain; its full sequence is Large ribosomal subunit protein uL14 (144 aa).

Belongs to the universal ribosomal protein uL14 family. In terms of assembly, part of the 50S ribosomal subunit. Forms a cluster with proteins L3 and L24e, part of which may contact the 16S rRNA in 2 intersubunit bridges.

Binds to 23S rRNA. Forms part of two intersubunit bridges in the 70S ribosome. The protein is Large ribosomal subunit protein uL14 of Pyrobaculum aerophilum (strain ATCC 51768 / DSM 7523 / JCM 9630 / CIP 104966 / NBRC 100827 / IM2).